The sequence spans 266 residues: Large ribosomal subunit protein uL3 (266 aa).

The segment at 124–149 (NQKIGPKSHGGGGGSKPVRQTGSLGD) is disordered.

This sequence belongs to the universal ribosomal protein uL3 family. Part of the 50S ribosomal subunit. Forms a cluster with proteins L14 and L19.

In terms of biological role, one of the primary rRNA binding proteins, it binds directly near the 3'-end of the 23S rRNA, where it nucleates assembly of the 50S subunit. This chain is Large ribosomal subunit protein uL3, found in Mycoplasmopsis pulmonis (strain UAB CTIP) (Mycoplasma pulmonis).